Consider the following 238-residue polypeptide: Ribonuclease PH (238 aa).

Phosphate contacts are provided by residues arginine 86 and 124-126 (GTR).

It belongs to the RNase PH family. As to quaternary structure, homohexameric ring arranged as a trimer of dimers.

It catalyses the reaction tRNA(n+1) + phosphate = tRNA(n) + a ribonucleoside 5'-diphosphate. In terms of biological role, phosphorolytic 3'-5' exoribonuclease that plays an important role in tRNA 3'-end maturation. Removes nucleotide residues following the 3'-CCA terminus of tRNAs; can also add nucleotides to the ends of RNA molecules by using nucleoside diphosphates as substrates, but this may not be physiologically important. Probably plays a role in initiation of 16S rRNA degradation (leading to ribosome degradation) during starvation. This Actinobacillus succinogenes (strain ATCC 55618 / DSM 22257 / CCUG 43843 / 130Z) protein is Ribonuclease PH.